A 168-amino-acid polypeptide reads, in one-letter code: Peptide deformylase (168 aa).

Residues Cys92 and His134 each contribute to the Fe cation site. Glu135 is a catalytic residue. Residue His138 coordinates Fe cation.

The protein belongs to the polypeptide deformylase family. Requires Fe(2+) as cofactor.

The enzyme catalyses N-terminal N-formyl-L-methionyl-[peptide] + H2O = N-terminal L-methionyl-[peptide] + formate. Functionally, removes the formyl group from the N-terminal Met of newly synthesized proteins. Requires at least a dipeptide for an efficient rate of reaction. N-terminal L-methionine is a prerequisite for activity but the enzyme has broad specificity at other positions. This Pseudomonas aeruginosa (strain ATCC 15692 / DSM 22644 / CIP 104116 / JCM 14847 / LMG 12228 / 1C / PRS 101 / PAO1) protein is Peptide deformylase.